The following is a 314-amino-acid chain: Methionyl-tRNA formyltransferase (314 aa).

112–115 (SLLP) is a (6S)-5,6,7,8-tetrahydrofolate binding site.

This sequence belongs to the Fmt family.

It catalyses the reaction L-methionyl-tRNA(fMet) + (6R)-10-formyltetrahydrofolate = N-formyl-L-methionyl-tRNA(fMet) + (6S)-5,6,7,8-tetrahydrofolate + H(+). Attaches a formyl group to the free amino group of methionyl-tRNA(fMet). The formyl group appears to play a dual role in the initiator identity of N-formylmethionyl-tRNA by promoting its recognition by IF2 and preventing the misappropriation of this tRNA by the elongation apparatus. This is Methionyl-tRNA formyltransferase from Buchnera aphidicola subsp. Schizaphis graminum (strain Sg).